A 116-amino-acid chain; its full sequence is Flagellar transcriptional regulator FlhD (116 aa).

It belongs to the FlhD family. As to quaternary structure, homodimer; disulfide-linked. Forms a heterohexamer composed of two FlhC and four FlhD subunits. Each FlhC binds a FlhD dimer, forming a heterotrimer, and a hexamer assembles by dimerization of two heterotrimers.

The protein resides in the cytoplasm. In terms of biological role, functions in complex with FlhC as a master transcriptional regulator that regulates transcription of several flagellar and non-flagellar operons by binding to their promoter region. Activates expression of class 2 flagellar genes, including fliA, which is a flagellum-specific sigma factor that turns on the class 3 genes. Also regulates genes whose products function in a variety of physiological pathways. This Escherichia coli O157:H7 protein is Flagellar transcriptional regulator FlhD.